We begin with the raw amino-acid sequence, 143 residues long: MAKKIQAYIKLQVKAGQANPSPPVGPALGQHGVNIMEFCKAFNAKTQGMEPGLPTPVIITVYSDRSFTFETKSTPASVLLKKAAGLTSGSARPNTVKVGTVTRAQLEEIAKTKQADLTAADLDAAVRTIAGSARSMGLNVEGV.

Belongs to the universal ribosomal protein uL11 family. Part of the ribosomal stalk of the 50S ribosomal subunit. Interacts with L10 and the large rRNA to form the base of the stalk. L10 forms an elongated spine to which L12 dimers bind in a sequential fashion forming a multimeric L10(L12)X complex. Post-translationally, one or more lysine residues are methylated.

Functionally, forms part of the ribosomal stalk which helps the ribosome interact with GTP-bound translation factors. This Ectopseudomonas mendocina (strain ymp) (Pseudomonas mendocina) protein is Large ribosomal subunit protein uL11.